The chain runs to 196 residues: Molybdenum cofactor guanylyltransferase (196 aa).

Residues 10-12 (LAG), lysine 23, asparagine 51, aspartate 69, and aspartate 99 each bind GTP. Aspartate 99 is a Mg(2+) binding site.

The protein belongs to the MobA family. Monomer. Requires Mg(2+) as cofactor.

It is found in the cytoplasm. It carries out the reaction Mo-molybdopterin + GTP + H(+) = Mo-molybdopterin guanine dinucleotide + diphosphate. Functionally, transfers a GMP moiety from GTP to Mo-molybdopterin (Mo-MPT) cofactor (Moco or molybdenum cofactor) to form Mo-molybdopterin guanine dinucleotide (Mo-MGD) cofactor. In Shewanella loihica (strain ATCC BAA-1088 / PV-4), this protein is Molybdenum cofactor guanylyltransferase.